An 858-amino-acid polypeptide reads, in one-letter code: Heat shock protein 105 kDa (858 aa).

S2 is subject to N-acetylserine. Residue K471 is modified to N6-acetyllysine. 2 disordered regions span residues 500–585 (KVPT…PPEA) and 801–858 (VTQP…MDLD). Residues 504 to 515 (EEEDGSSLEADM) show a composition bias toward acidic residues. Phosphoserine occurs at positions 509 and 510. Polar residues predominate over residues 533–549 (QQDNSEAGTQPQVQTDG). Phosphoserine is present on S558. Phosphothreonine is present on T562. 2 stretches are compositionally biased toward basic and acidic residues: residues 564–585 (EESK…PPEA) and 806–815 (PKIESPKLER). S810 is subject to Phosphoserine. T816 carries the post-translational modification Phosphothreonine.

It belongs to the heat shock protein 70 family. In terms of assembly, interacts with HSPA8/HSC70. Interacts with HSPA1A (via NBD) and HSPA1B (via NBD). Post-translationally, phosphorylation on Ser-509 may be important for regulation of the HSPA8/HSC70 chaperone activity. Expressed in neurons in the cerebrum and Purkinje cells in the cerebellum (at protein level). Expressed in testis and no expression or only low-level expression in liver, spleen, lung, and kidney (at protein level). Highly expressed in the brain and moderately expressed in lung, heart, thymus, spleen, liver, and small intestine.

Its subcellular location is the cytoplasm. It localises to the nucleus. In terms of biological role, acts as a nucleotide-exchange factor (NEF) for chaperone proteins HSPA1A and HSPA1B, promoting the release of ADP from HSPA1A/B thereby triggering client/substrate protein release. Prevents the aggregation of denatured proteins in cells under severe stress, on which the ATP levels decrease markedly. Inhibits HSPA8/HSC70 ATPase and chaperone activities. The chain is Heat shock protein 105 kDa (Hsph1) from Mus musculus (Mouse).